We begin with the raw amino-acid sequence, 588 residues long: Aspartate--tRNA ligase (588 aa).

E174 contributes to the L-aspartate binding site. The segment at Q198 to K201 is aspartate. An L-aspartate-binding site is contributed by R220. Residues R220–E222 and Q229 each bind ATP. H448 is an L-aspartate binding site. ATP is bound at residue E482. Position 489 (R489) interacts with L-aspartate. G534–R537 is an ATP binding site.

Belongs to the class-II aminoacyl-tRNA synthetase family. Type 1 subfamily. As to quaternary structure, homodimer.

The protein localises to the cytoplasm. The catalysed reaction is tRNA(Asp) + L-aspartate + ATP = L-aspartyl-tRNA(Asp) + AMP + diphosphate. In terms of biological role, catalyzes the attachment of L-aspartate to tRNA(Asp) in a two-step reaction: L-aspartate is first activated by ATP to form Asp-AMP and then transferred to the acceptor end of tRNA(Asp). The chain is Aspartate--tRNA ligase from Xanthomonas oryzae pv. oryzae (strain PXO99A).